We begin with the raw amino-acid sequence, 88 residues long: UPF0367 protein Tery_1229 (88 aa).

It belongs to the UPF0367 family.

This chain is UPF0367 protein Tery_1229, found in Trichodesmium erythraeum (strain IMS101).